An 84-amino-acid chain; its full sequence is Small ribosomal subunit protein bS20 (84 aa).

The segment at 1 to 25 (MANIVSNEKTYRHTQKVRKENHAKM) is disordered.

This sequence belongs to the bacterial ribosomal protein bS20 family.

Binds directly to 16S ribosomal RNA. The protein is Small ribosomal subunit protein bS20 of Ureaplasma parvum serovar 3 (strain ATCC 700970).